A 106-amino-acid polypeptide reads, in one-letter code: Protein aveugle (106 aa).

One can recognise an SAM domain in the interval 26–91 (WTVSDVLKWY…WREIVKQRLK (66 aa)).

As to quaternary structure, interacts with the SAM domain of cnk.

It is found in the cytoplasm. The protein localises to the membrane. Required for normal photoreceptor differentiation between Ras and Raf for EGFR signaling in the eye and for mitogen-activated protein kinase phosphorylation. Probably acts together with Cnk to promote Raf activation, perhaps by recruiting an activating kinase. The sequence is that of Protein aveugle (ave) from Drosophila melanogaster (Fruit fly).